Consider the following 358-residue polypeptide: Peptide chain release factor 1 (358 aa).

Glutamine 236 bears the N5-methylglutamine mark.

The protein belongs to the prokaryotic/mitochondrial release factor family. In terms of processing, methylated by PrmC. Methylation increases the termination efficiency of RF1.

It localises to the cytoplasm. Functionally, peptide chain release factor 1 directs the termination of translation in response to the peptide chain termination codons UAG and UAA. In Corynebacterium efficiens (strain DSM 44549 / YS-314 / AJ 12310 / JCM 11189 / NBRC 100395), this protein is Peptide chain release factor 1.